Here is a 238-residue protein sequence, read N- to C-terminus: Flagellar L-ring protein (238 aa).

The signal sequence occupies residues 1 to 17 (MIRKTLAASCAVLLMAG). Residue Cys-18 is the site of N-palmitoyl cysteine attachment. Residue Cys-18 is the site of S-diacylglycerol cysteine attachment.

This sequence belongs to the FlgH family. The basal body constitutes a major portion of the flagellar organelle and consists of four rings (L,P,S, and M) mounted on a central rod.

The protein resides in the cell outer membrane. Its subcellular location is the bacterial flagellum basal body. Its function is as follows. Assembles around the rod to form the L-ring and probably protects the motor/basal body from shearing forces during rotation. This chain is Flagellar L-ring protein, found in Nitratidesulfovibrio vulgaris (strain ATCC 29579 / DSM 644 / CCUG 34227 / NCIMB 8303 / VKM B-1760 / Hildenborough) (Desulfovibrio vulgaris).